Here is a 262-residue protein sequence, read N- to C-terminus: Undecaprenyl-diphosphatase (262 aa).

Transmembrane regions (helical) follow at residues 15-35 (LTEW…IILL), 38-58 (SSAA…IVAF), 91-111 (LYIL…AKYV), 114-134 (IFGS…LLYS), 149-169 (ALIV…RSGA), 189-209 (FLLS…VSPA), 219-239 (VGLL…LSII), and 242-262 (GRLH…LSLL).

It belongs to the UppP family.

It is found in the cell membrane. The enzyme catalyses di-trans,octa-cis-undecaprenyl diphosphate + H2O = di-trans,octa-cis-undecaprenyl phosphate + phosphate + H(+). Functionally, catalyzes the dephosphorylation of undecaprenyl diphosphate (UPP). In Korarchaeum cryptofilum (strain OPF8), this protein is Undecaprenyl-diphosphatase.